The primary structure comprises 1409 residues: DNA-directed RNA polymerase subunit beta' (1409 aa).

The Zn(2+) site is built by C72, C74, C87, and C90. Mg(2+) contacts are provided by D462, D464, and D466. The Zn(2+) site is built by C816, C890, C897, and C900.

This sequence belongs to the RNA polymerase beta' chain family. The RNAP catalytic core consists of 2 alpha, 1 beta, 1 beta' and 1 omega subunit. When a sigma factor is associated with the core the holoenzyme is formed, which can initiate transcription. Mg(2+) is required as a cofactor. Zn(2+) serves as cofactor.

The enzyme catalyses RNA(n) + a ribonucleoside 5'-triphosphate = RNA(n+1) + diphosphate. Its function is as follows. DNA-dependent RNA polymerase catalyzes the transcription of DNA into RNA using the four ribonucleoside triphosphates as substrates. The sequence is that of DNA-directed RNA polymerase subunit beta' from Aromatoleum aromaticum (strain DSM 19018 / LMG 30748 / EbN1) (Azoarcus sp. (strain EbN1)).